The sequence spans 353 residues: Nicotinate-nucleotide--dimethylbenzimidazole phosphoribosyltransferase (353 aa).

Glutamate 319 serves as the catalytic Proton acceptor.

It belongs to the CobT family.

The enzyme catalyses 5,6-dimethylbenzimidazole + nicotinate beta-D-ribonucleotide = alpha-ribazole 5'-phosphate + nicotinate + H(+). Its pathway is nucleoside biosynthesis; alpha-ribazole biosynthesis; alpha-ribazole from 5,6-dimethylbenzimidazole: step 1/2. Catalyzes the synthesis of alpha-ribazole-5'-phosphate from nicotinate mononucleotide (NAMN) and 5,6-dimethylbenzimidazole (DMB). This Prosthecochloris aestuarii (strain DSM 271 / SK 413) protein is Nicotinate-nucleotide--dimethylbenzimidazole phosphoribosyltransferase.